A 290-amino-acid chain; its full sequence is UPF0761 membrane protein ASA_4118 (290 aa).

The next 6 membrane-spanning stretches (helical) occupy residues 48-68, 104-124, 144-164, 182-202, 216-236, and 250-270; these read LLSLVPMIAVVFGMMSAFPVF, NTTAVGIGALIVVALMLISAI, FAMYWMILTLGPVLIGGSIAI, IGYLLLRSLPFLFSVLTFLLV, AFIGALVAATLFELAKRGFAI, and ALATIPVLFVWVYLSWLVVLL.

This sequence belongs to the UPF0761 family.

It localises to the cell inner membrane. In Aeromonas salmonicida (strain A449), this protein is UPF0761 membrane protein ASA_4118.